Here is a 1235-residue protein sequence, read N- to C-terminus: DNA polymerase (1235 aa).

The DOD-type homing endonuclease domain maps to L773–V887.

This sequence belongs to the DNA polymerase type-B family. In terms of processing, this protein undergoes a protein self splicing that involves a post-translational excision of the intervening region (intein) followed by peptide ligation.

The enzyme catalyses DNA(n) + a 2'-deoxyribonucleoside 5'-triphosphate = DNA(n+1) + diphosphate. The polypeptide is DNA polymerase (pol) (Pyrococcus horikoshii (strain ATCC 700860 / DSM 12428 / JCM 9974 / NBRC 100139 / OT-3)).